The primary structure comprises 175 residues: NAD(P)H-quinone oxidoreductase subunit J (175 aa).

It belongs to the complex I 30 kDa subunit family. NDH-1 can be composed of about 15 different subunits; different subcomplexes with different compositions have been identified which probably have different functions.

The protein localises to the cellular thylakoid membrane. It catalyses the reaction a plastoquinone + NADH + (n+1) H(+)(in) = a plastoquinol + NAD(+) + n H(+)(out). The enzyme catalyses a plastoquinone + NADPH + (n+1) H(+)(in) = a plastoquinol + NADP(+) + n H(+)(out). Its function is as follows. NDH-1 shuttles electrons from an unknown electron donor, via FMN and iron-sulfur (Fe-S) centers, to quinones in the respiratory and/or the photosynthetic chain. The immediate electron acceptor for the enzyme in this species is believed to be plastoquinone. Couples the redox reaction to proton translocation, and thus conserves the redox energy in a proton gradient. Cyanobacterial NDH-1 also plays a role in inorganic carbon-concentration. The polypeptide is NAD(P)H-quinone oxidoreductase subunit J (Nostoc sp. (strain PCC 7120 / SAG 25.82 / UTEX 2576)).